The sequence spans 77 residues: U8-lycotoxin-Ls1m (77 aa).

The signal sequence occupies residues 1–20 (MKLMIFTGLFLFAIVSLIEA). Residues 21-26 (QAENEK) constitute a propeptide that is removed on maturation.

Belongs to the neurotoxin 19 (CSTX) family. 08 (U8-Lctx) subfamily. Contains 4 disulfide bonds. Expressed by the venom gland.

The protein localises to the secreted. This chain is U8-lycotoxin-Ls1m, found in Lycosa singoriensis (Wolf spider).